Here is a 424-residue protein sequence, read N- to C-terminus: Interferon regulatory factor 8 (424 aa).

The segment at residues 7-114 (GRRLRQWLIE…EPYKVYRIVP (108 aa)) is a DNA-binding region (IRF tryptophan pentad repeat).

This sequence belongs to the IRF family. Interacts with COPS2. Interacts (via C-terminus) with TRIM21 (via C-terminus). Interacts with the BATF-JUNB heterodimer. Interacts with BATF (via bZIP domain); the interaction is direct. Interacts with SPI1. Post-translationally, ubiquitinated. Ubiquitination by TRIM21 in macrophages, a process that is strongly increased upon interferon gamma stimulation, leds to the enhanced transcriptional activity of target cytokine genes. Ubiquitination leads to its degradation by the proteasome. In terms of processing, sumoylated with SUMO3. Desumoylated by SENP1. Expressed in bone marrow macrophages (at protein level). Mainly expressed in lymphoid tissues. Predominantly expressed in CD8(+)-expressing dendritic cells.

It is found in the nucleus. The protein localises to the cytoplasm. Functionally, transcription factor that specifically binds to the upstream regulatory region of type I interferon (IFN) and IFN-inducible MHC class I genes (the interferon consensus sequence (ICS)). Can both act as a transcriptional activator or repressor. Plays a negative regulatory role in cells of the immune system. Involved in CD8(+) dendritic cell differentiation by forming a complex with the BATF-JUNB heterodimer in immune cells, leading to recognition of AICE sequence (5'-TGAnTCA/GAAA-3'), an immune-specific regulatory element, followed by cooperative binding of BATF and IRF8 and activation of genes. Required for the development of plasmacytoid dendritic cells (pDCs), which produce most of the type I IFN in response to viral infection. Positively regulates macroautophagy in dendritic cells. Acts as a transcriptional repressor of osteoclast differentiation factors such as NFATC1 and EEIG1. The chain is Interferon regulatory factor 8 from Mus musculus (Mouse).